Reading from the N-terminus, the 132-residue chain is ATP synthase epsilon chain (132 aa).

It belongs to the ATPase epsilon chain family. As to quaternary structure, F-type ATPases have 2 components, CF(1) - the catalytic core - and CF(0) - the membrane proton channel. CF(1) has five subunits: alpha(3), beta(3), gamma(1), delta(1), epsilon(1). CF(0) has four main subunits: a, b, b' and c.

It localises to the cellular chromatophore membrane. In terms of biological role, produces ATP from ADP in the presence of a proton gradient across the membrane. This Rhodobacter capsulatus (Rhodopseudomonas capsulata) protein is ATP synthase epsilon chain (atpC).